A 360-amino-acid chain; its full sequence is MDPEETSVYLDYYYATSPNSDIRETHSHVPYTSVFLPVFYTAVFLTGVLGNLVLMGALHFKPGSRRLIDIFIINLAASDFIFLVTLPLWVDKEASLGLWRTGSFLCKGSSYMISVNMHCSVLLLTCMSVDRYLAIVWPVVSRKFRRTDCAYVVCASIWFISCLLGLPTLLSRELTLIDDKPYCAEKKATPIKLIWSLVALIFTFFVPLLSIVTCYCCIARKLCAHYQQSGKHNKKLKKSIKIIFIVVAAFLVSWLPFNTFKFLAIVSGLRQEHYLPSAILQLGMEVSGPLAFANSCVNPFIYYIFDSYIRRAIVHCLCPCLKNYDFGSSTETSDSHLTKALSTFIHAEDFARRRKRSVSL.

Residues 1 to 33 (MDPEETSVYLDYYYATSPNSDIRETHSHVPYTS) are Extracellular-facing. A helical membrane pass occupies residues 34-54 (VFLPVFYTAVFLTGVLGNLVL). At 55 to 69 (MGALHFKPGSRRLID) the chain is on the cytoplasmic side. The helical transmembrane segment at 70 to 90 (IFIINLAASDFIFLVTLPLWV) threads the bilayer. At 91–120 (DKEASLGLWRTGSFLCKGSSYMISVNMHCS) the chain is on the extracellular side. The chain crosses the membrane as a helical span at residues 121-141 (VLLLTCMSVDRYLAIVWPVVS). The Cytoplasmic portion of the chain corresponds to 142–149 (RKFRRTDC). A helical transmembrane segment spans residues 150 to 170 (AYVVCASIWFISCLLGLPTLL). The Extracellular segment spans residues 171–192 (SRELTLIDDKPYCAEKKATPIK). A helical transmembrane segment spans residues 193-213 (LIWSLVALIFTFFVPLLSIVT). At 214-239 (CYCCIARKLCAHYQQSGKHNKKLKKS) the chain is on the cytoplasmic side. Residues 240 to 260 (IKIIFIVVAAFLVSWLPFNTF) form a helical membrane-spanning segment. Residues 261 to 284 (KFLAIVSGLRQEHYLPSAILQLGM) are Extracellular-facing. The helical transmembrane segment at 285-305 (EVSGPLAFANSCVNPFIYYIF) threads the bilayer. Residues 306 to 360 (DSYIRRAIVHCLCPCLKNYDFGSSTETSDSHLTKALSTFIHAEDFARRRKRSVSL) are Cytoplasmic-facing. Position 359 is a phosphoserine (Ser-359).

The protein belongs to the G-protein coupled receptor 1 family. Interacts with adapter YWHAE; this interaction promotes ER-to-Golgi transport of GPR15. Interacts with GNAI1; this interaction initiates the signaling pathway. In terms of processing, phosphorylation is necessary for YWHAE binding and efficient surface expression. O-glycosylated. Sialylated O-glycans in the N-terminal tail inhibits binding of GPR15LG. Post-translationally, sulfation is required for efficient binding of GPR15LG. Highly expressed in lymphoid tissues, including macrophages and peripheral blood mononuclear cells.

It localises to the cell membrane. Its function is as follows. G protein-coupled receptor that plays an important role in immune homeostasis. Acts via its natural ligand GPR15LG, a chemokine-like polypeptide strongly expressed in gastrointestinal tissues. GPR15-GPR15LG signaling axis regulates intestinal homeostasis and inflammation through the migration of immune cells. Controls thereby the specific homing of T-cells, particularly FOXP3+ regulatory T-cells (Tregs), to the large intestine lamina propria. Also required for skin localization of thymus-derived dendritic epidermal T-cells. Plays an important role in mediating cytoprotective function as well as angiogenesis of thrombomodulin. Mechanistically, preferentially signals through the Gi/o pathway to inhibit adenylate cyclase activity and activate a phosphatidylinositol-calcium second messenger system that regulates the release of Ca(2+) ions from intracellular stores. (Microbial infection) Acts as an alternative coreceptor with CD4 for HIV-1 infection. The polypeptide is G-protein coupled receptor 15 (GPR15) (Homo sapiens (Human)).